Reading from the N-terminus, the 492-residue chain is Steroid 21-hydroxylase (492 aa).

The heme b site is built by Arg-91 and Lys-120. Arg-231 contributes to the 17alpha-hydroxyprogesterone binding site. Arg-231 serves as a coordination point for progesterone. Positions 363, 424, and 426 each coordinate heme b.

This sequence belongs to the cytochrome P450 family. Requires heme b as cofactor.

The protein resides in the endoplasmic reticulum membrane. Its subcellular location is the microsome membrane. The enzyme catalyses 17alpha-hydroxyprogesterone + reduced [NADPH--hemoprotein reductase] + O2 = 11-deoxycortisol + oxidized [NADPH--hemoprotein reductase] + H2O + H(+). It catalyses the reaction progesterone + reduced [NADPH--hemoprotein reductase] + O2 = 21-hydroxyprogesterone + oxidized [NADPH--hemoprotein reductase] + H2O + H(+). Functionally, specifically catalyzes the 21-hydroxylation of steroids. Required for the adrenal synthesis of mineralocorticoids and glucocorticoids. The protein is Steroid 21-hydroxylase (CYP21) of Canis lupus familiaris (Dog).